The sequence spans 271 residues: PH domain-containing protein ECU06_0670 (271 aa).

The tract at residues 26–145 is disordered; that stretch reads AKKTLDSSES…EKKNDAFIPP (120 aa). Basic and acidic residues-rich tracts occupy residues 42–64, 92–120, and 128–140; these read EVGE…EPAM, QPEK…LLDK, and EENA…KKND. The PH domain maps to 166-267; that stretch reads NTVVEGWMWK…WVEKLNETIR (102 aa).

The polypeptide is PH domain-containing protein ECU06_0670 (Encephalitozoon cuniculi (strain GB-M1) (Microsporidian parasite)).